The sequence spans 221 residues: Large ribosomal subunit protein uL16x (221 aa).

This sequence belongs to the universal ribosomal protein uL16 family. As to quaternary structure, component of the small ribosomal subunit. Mature ribosomes consist of a small (40S) and a large (60S) subunit. The 40S subunit contains about 33 different proteins and 1 molecule of RNA (18S). The 60S subunit contains about 49 different proteins and 3 molecules of RNA (25S, 5.8S and 5S).

This Arabidopsis thaliana (Mouse-ear cress) protein is Large ribosomal subunit protein uL16x (RPL10C).